The primary structure comprises 103 residues: Histone H4 (103 aa).

A compositionally biased stretch (gly residues) spans 1–14 (MTGRGKGGKGLGKG). Residues 1-20 (MTGRGKGGKGLGKGGAKRHR) form a disordered region. K6 and K13 each carry N6-acetyl-N6-methyllysine; alternate. The DNA-binding element occupies 17-21 (KRHRK).

This sequence belongs to the histone H4 family. In terms of assembly, the nucleosome is a histone octamer containing two molecules each of H2A, H2B, H3 and H4 assembled in one H3-H4 heterotetramer and two H2A-H2B heterodimers. The octamer wraps approximately 147 bp of DNA.

It is found in the nucleus. The protein localises to the chromosome. Core component of nucleosome. Nucleosomes wrap and compact DNA into chromatin, limiting DNA accessibility to the cellular machineries which require DNA as a template. Histones thereby play a central role in transcription regulation, DNA repair, DNA replication and chromosomal stability. DNA accessibility is regulated via a complex set of post-translational modifications of histones, also called histone code, and nucleosome remodeling. This chain is Histone H4, found in Trichogramma cacaeciae (Moth egg parasite).